The chain runs to 511 residues: Phosphoenolpyruvate carboxylase (511 aa).

This sequence belongs to the PEPCase type 2 family. In terms of assembly, homotetramer. Requires Mg(2+) as cofactor.

The catalysed reaction is oxaloacetate + phosphate = phosphoenolpyruvate + hydrogencarbonate. In terms of biological role, catalyzes the irreversible beta-carboxylation of phosphoenolpyruvate (PEP) to form oxaloacetate (OAA), a four-carbon dicarboxylic acid source for the tricarboxylic acid cycle. The chain is Phosphoenolpyruvate carboxylase from Saccharolobus islandicus (strain L.S.2.15 / Lassen #1) (Sulfolobus islandicus).